We begin with the raw amino-acid sequence, 452 residues long: Chromosomal replication initiator protein DnaA (452 aa).

The domain I, interacts with DnaA modulators stretch occupies residues 1–80; the sequence is MSSTVSTLWR…NNDQFMVKIQ (80 aa). A domain II region spans residues 80–114; sequence QDGIKPTEKTTTNVEQKTQNENCHNEITSQQNYRS. The interval 115–332 is domain III, AAA+ region; it reads YLNKNHVFDN…GALNRVHAHA (218 aa). Gly-160, Gly-162, Lys-163, and Thr-164 together coordinate ATP. The segment at 333-452 is domain IV, binds dsDNA; the sequence is EFTGKAITID…WSNLIRTLSV (120 aa).

It belongs to the DnaA family. In terms of assembly, oligomerizes as a right-handed, spiral filament on DNA at oriC.

It is found in the cytoplasm. Functionally, plays an essential role in the initiation and regulation of chromosomal replication. ATP-DnaA binds to the origin of replication (oriC) to initiate formation of the DNA replication initiation complex once per cell cycle. Binds the DnaA box (a 9 base pair repeat at the origin) and separates the double-stranded (ds)DNA. Forms a right-handed helical filament on oriC DNA; dsDNA binds to the exterior of the filament while single-stranded (ss)DNA is stabiized in the filament's interior. The ATP-DnaA-oriC complex binds and stabilizes one strand of the AT-rich DNA unwinding element (DUE), permitting loading of DNA polymerase. After initiation quickly degrades to an ADP-DnaA complex that is not apt for DNA replication. Binds acidic phospholipids. The protein is Chromosomal replication initiator protein DnaA of Histophilus somni (strain 129Pt) (Haemophilus somnus).